A 244-amino-acid chain; its full sequence is Protein FAM168A (244 aa).

The residue at position 1 (M1) is an N-acetylmethionine. At R102 the chain carries Asymmetric dimethylarginine. Residues 107 to 126 are disordered; the sequence is TPYKVPPTQSNTAPPPYSPS.

It belongs to the FAM168 family. In terms of assembly, interacts with POLB. Interacts with AKT1 and MT1X. May interact with FAM168B.

In terms of biological role, in cancer context, protects cells from induced-DNA damage and apoptosis. Acts, at least in part, through PI3K/AKT/NFKB signaling pathway and by preventing POLB degradation. Decreases POLB ubiquitation and stabilizes its protein levels. The chain is Protein FAM168A (Fam168a) from Mus musculus (Mouse).